A 681-amino-acid chain; its full sequence is Methionine--tRNA ligase (681 aa).

The short motif at 14 to 24 (PYANGSIHLGH) is the 'HIGH' region element. Zn(2+) is bound by residues C145, C148, C158, and C161. The 'KMSKS' region signature appears at 331-335 (KMSKS). K334 lines the ATP pocket. The tRNA-binding domain maps to 579–681 (AFAAIDLRVA…SGAKPGQRIK (103 aa)).

Belongs to the class-I aminoacyl-tRNA synthetase family. MetG type 1 subfamily. In terms of assembly, homodimer. The cofactor is Zn(2+).

It localises to the cytoplasm. It catalyses the reaction tRNA(Met) + L-methionine + ATP = L-methionyl-tRNA(Met) + AMP + diphosphate. Its function is as follows. Is required not only for elongation of protein synthesis but also for the initiation of all mRNA translation through initiator tRNA(fMet) aminoacylation. This Pseudomonas fluorescens (strain ATCC BAA-477 / NRRL B-23932 / Pf-5) protein is Methionine--tRNA ligase.